The primary structure comprises 365 residues: Alanine racemase (365 aa).

The Proton acceptor; specific for D-alanine role is filled by Lys-32. At Lys-32 the chain carries N6-(pyridoxal phosphate)lysine. Position 128 (Arg-128) interacts with substrate. The Proton acceptor; specific for L-alanine role is filled by Tyr-257. Residue Met-305 participates in substrate binding.

This sequence belongs to the alanine racemase family. It depends on pyridoxal 5'-phosphate as a cofactor.

The enzyme catalyses L-alanine = D-alanine. Its pathway is amino-acid biosynthesis; D-alanine biosynthesis; D-alanine from L-alanine: step 1/1. Its function is as follows. Catalyzes the interconversion of L-alanine and D-alanine. May also act on other amino acids. In Francisella tularensis subsp. holarctica (strain LVS), this protein is Alanine racemase (alr).